Consider the following 448-residue polypeptide: Tubulin beta chain (448 aa).

GTP contacts are provided by glutamine 11, glutamate 69, serine 138, glycine 142, threonine 143, glycine 144, asparagine 204, and asparagine 226. Glutamate 69 is a Mg(2+) binding site. The disordered stretch occupies residues 425 to 448; that stretch reads YQDASISEGEEEYLEEEEPLEHEE. Over residues 432–448 the composition is skewed to acidic residues; the sequence is EGEEEYLEEEEPLEHEE.

The protein belongs to the tubulin family. In terms of assembly, dimer of alpha and beta chains. A typical microtubule is a hollow water-filled tube with an outer diameter of 25 nm and an inner diameter of 15 nM. Alpha-beta heterodimers associate head-to-tail to form protofilaments running lengthwise along the microtubule wall with the beta-tubulin subunit facing the microtubule plus end conferring a structural polarity. Microtubules usually have 13 protofilaments but different protofilament numbers can be found in some organisms and specialized cells. Requires Mg(2+) as cofactor.

Its subcellular location is the cytoplasm. The protein resides in the cytoskeleton. Its function is as follows. Tubulin is the major constituent of microtubules, a cylinder consisting of laterally associated linear protofilaments composed of alpha- and beta-tubulin heterodimers. Microtubules grow by the addition of GTP-tubulin dimers to the microtubule end, where a stabilizing cap forms. Below the cap, tubulin dimers are in GDP-bound state, owing to GTPase activity of alpha-tubulin. The polypeptide is Tubulin beta chain (benA56) (Aspergillus oryzae (strain ATCC 42149 / RIB 40) (Yellow koji mold)).